The sequence spans 379 residues: LIM/homeobox protein Lhx9 (379 aa).

2 consecutive LIM zinc-binding domains span residues 51-112 (TLCA…RFSV) and 113-175 (QRCA…LVQG). Disordered regions lie at residues 232-257 (ENDTDLDRDQSYPPSQKTKRMRTSFK) and 310-379 (RQEN…TNLF). Basic residues predominate over residues 248 to 257 (KTKRMRTSFK). Residues 249–308 (TKRMRTSFKHHQLRTTKSYFAINHNPDAKDLKQLAQKTGLTKRVLQVWFQNARAKFRRNL) constitute a DNA-binding region (homeobox). The span at 326–379 (APASTDSAALTPTGAASTLSDLTSPSLNVGASVTPNMDSHESGSPSQTTLTNLF) shows a compositional bias: polar residues.

As to expression, isoform 1 and isoform 3 are expressed in ovary, testis, brain and heart. Isoform 4 and isoform 5 are expressed in brain.

The protein localises to the nucleus. Its function is as follows. May be involved in gonadal development. In Glandirana rugosa (Japanese wrinkled frog), this protein is LIM/homeobox protein Lhx9 (lhx9).